The sequence spans 476 residues: Siroheme synthase (476 aa).

The precorrin-2 dehydrogenase /sirohydrochlorin ferrochelatase stretch occupies residues 1–203; that stretch reads MHYFPVFADL…RQTEAAKKEL (203 aa). NAD(+) contacts are provided by residues 22 to 23 and 43 to 44; these read GV and QK. Serine 128 is modified (phosphoserine). The uroporphyrinogen-III C-methyltransferase stretch occupies residues 214–476; it reads GFVSLVGAGP…LDSLRIESVA (263 aa). Position 223 (proline 223) interacts with S-adenosyl-L-methionine. Aspartate 246 (proton acceptor) is an active-site residue. The active-site Proton donor is lysine 268. S-adenosyl-L-methionine-binding positions include 299 to 301, valine 304, 329 to 330, methionine 381, and glycine 410; these read GGD and TA.

In the N-terminal section; belongs to the precorrin-2 dehydrogenase / sirohydrochlorin ferrochelatase family. This sequence in the C-terminal section; belongs to the precorrin methyltransferase family.

The catalysed reaction is uroporphyrinogen III + 2 S-adenosyl-L-methionine = precorrin-2 + 2 S-adenosyl-L-homocysteine + H(+). It catalyses the reaction precorrin-2 + NAD(+) = sirohydrochlorin + NADH + 2 H(+). It carries out the reaction siroheme + 2 H(+) = sirohydrochlorin + Fe(2+). It participates in cofactor biosynthesis; adenosylcobalamin biosynthesis; precorrin-2 from uroporphyrinogen III: step 1/1. Its pathway is cofactor biosynthesis; adenosylcobalamin biosynthesis; sirohydrochlorin from precorrin-2: step 1/1. The protein operates within porphyrin-containing compound metabolism; siroheme biosynthesis; precorrin-2 from uroporphyrinogen III: step 1/1. It functions in the pathway porphyrin-containing compound metabolism; siroheme biosynthesis; siroheme from sirohydrochlorin: step 1/1. It participates in porphyrin-containing compound metabolism; siroheme biosynthesis; sirohydrochlorin from precorrin-2: step 1/1. Functionally, multifunctional enzyme that catalyzes the SAM-dependent methylations of uroporphyrinogen III at position C-2 and C-7 to form precorrin-2 via precorrin-1. Then it catalyzes the NAD-dependent ring dehydrogenation of precorrin-2 to yield sirohydrochlorin. Finally, it catalyzes the ferrochelation of sirohydrochlorin to yield siroheme. The sequence is that of Siroheme synthase from Actinobacillus succinogenes (strain ATCC 55618 / DSM 22257 / CCUG 43843 / 130Z).